The primary structure comprises 244 residues: 7-cyano-7-deazaguanine synthase (244 aa).

17–27 (FSGGQDSTTCL) serves as a coordination point for ATP. 4 residues coordinate Zn(2+): Cys-205, Cys-220, Cys-223, and Cys-226.

It belongs to the QueC family. The cofactor is Zn(2+).

It catalyses the reaction 7-carboxy-7-deazaguanine + NH4(+) + ATP = 7-cyano-7-deazaguanine + ADP + phosphate + H2O + H(+). The protein operates within purine metabolism; 7-cyano-7-deazaguanine biosynthesis. Functionally, catalyzes the ATP-dependent conversion of 7-carboxy-7-deazaguanine (CDG) to 7-cyano-7-deazaguanine (preQ(0)). This chain is 7-cyano-7-deazaguanine synthase, found in Bordetella parapertussis (strain 12822 / ATCC BAA-587 / NCTC 13253).